A 600-amino-acid chain; its full sequence is Elongation factor 4 (600 aa).

A tr-type G domain is found at 5 to 187 (KYIRNFSIIA…AIINKLPSPK (183 aa)). GTP is bound by residues 17–22 (DHGKST) and 134–137 (NKID).

This sequence belongs to the TRAFAC class translation factor GTPase superfamily. Classic translation factor GTPase family. LepA subfamily.

Its subcellular location is the cell inner membrane. The enzyme catalyses GTP + H2O = GDP + phosphate + H(+). Required for accurate and efficient protein synthesis under certain stress conditions. May act as a fidelity factor of the translation reaction, by catalyzing a one-codon backward translocation of tRNAs on improperly translocated ribosomes. Back-translocation proceeds from a post-translocation (POST) complex to a pre-translocation (PRE) complex, thus giving elongation factor G a second chance to translocate the tRNAs correctly. Binds to ribosomes in a GTP-dependent manner. This Rickettsia typhi (strain ATCC VR-144 / Wilmington) protein is Elongation factor 4.